The primary structure comprises 40 residues: Beta-glucosidase 1 (40 aa).

The enzyme catalyses Hydrolysis of terminal, non-reducing beta-D-glucosyl residues with release of beta-D-glucose.. The chain is Beta-glucosidase 1 from Passalora fulva (Tomato leaf mold).